Reading from the N-terminus, the 337-residue chain is DNA-directed RNA polymerase subunit alpha (337 aa).

Positions 1–223 (MLISQRPALT…ELFGLAQELN (223 aa)) are alpha N-terminal domain (alpha-NTD). The interval 238–337 (SEHIAAYSMP…IDTEGEDIAE (100 aa)) is alpha C-terminal domain (alpha-CTD).

Belongs to the RNA polymerase alpha chain family. As to quaternary structure, homodimer. The RNAP catalytic core consists of 2 alpha, 1 beta, 1 beta' and 1 omega subunit. When a sigma factor is associated with the core the holoenzyme is formed, which can initiate transcription.

It catalyses the reaction RNA(n) + a ribonucleoside 5'-triphosphate = RNA(n+1) + diphosphate. In terms of biological role, DNA-dependent RNA polymerase catalyzes the transcription of DNA into RNA using the four ribonucleoside triphosphates as substrates. The sequence is that of DNA-directed RNA polymerase subunit alpha from Corynebacterium jeikeium (strain K411).